Here is a 328-residue protein sequence, read N- to C-terminus: Malate dehydrogenase (328 aa).

G11–G17 is a binding site for NAD(+). R94 and R100 together coordinate substrate. Residues N107, Q114, and V131–N133 each bind NAD(+). Substrate is bound by residues N133 and R164. The Proton acceptor role is filled by H189.

The protein belongs to the LDH/MDH superfamily. MDH type 2 family.

The catalysed reaction is (S)-malate + NAD(+) = oxaloacetate + NADH + H(+). Catalyzes the reversible oxidation of malate to oxaloacetate. This Xanthomonas oryzae pv. oryzae (strain MAFF 311018) protein is Malate dehydrogenase.